A 400-amino-acid polypeptide reads, in one-letter code: Cytoplasmic polyadenylated homeobox-like protein 2 (400 aa).

The disordered stretch occupies residues 1 to 29 (MSSQAFPAEEDHHNEERQTKKKRKTKHRH). Positions 9-18 (EEDHHNEERQ) are enriched in basic and acidic residues. The span at 19-29 (TKKKRKTKHRH) shows a compositional bias: basic residues. Positions 24 to 83 (KTKHRHKFSEELLQELKEIFGENGYPDFTTRKTLANKFDCPVNVINNWFQNNRARLPPEE) form a DNA-binding region, homeobox.

It localises to the nucleus. In Homo sapiens (Human), this protein is Cytoplasmic polyadenylated homeobox-like protein 2.